Consider the following 343-residue polypeptide: N-acetyl-gamma-glutamyl-phosphate reductase (343 aa).

Residue Cys152 is part of the active site.

Belongs to the NAGSA dehydrogenase family. Type 1 subfamily.

The protein resides in the cytoplasm. It carries out the reaction N-acetyl-L-glutamate 5-semialdehyde + phosphate + NADP(+) = N-acetyl-L-glutamyl 5-phosphate + NADPH + H(+). Its pathway is amino-acid biosynthesis; L-arginine biosynthesis; N(2)-acetyl-L-ornithine from L-glutamate: step 3/4. Functionally, catalyzes the NADPH-dependent reduction of N-acetyl-5-glutamyl phosphate to yield N-acetyl-L-glutamate 5-semialdehyde. The polypeptide is N-acetyl-gamma-glutamyl-phosphate reductase (Methanopyrus kandleri (strain AV19 / DSM 6324 / JCM 9639 / NBRC 100938)).